Consider the following 669-residue polypeptide: Thrombospondin-type laminin G domain and EAR repeat-containing protein (669 aa).

The first 19 residues, 1 to 19, serve as a signal peptide directing secretion; that stretch reads MSALLSLCFVLPLAAPGHG. The Laminin G-like domain maps to 58 to 277; that stretch reads GLQLSVAAPR…RVTLGPQPPC (220 aa). 7 EAR repeats span residues 313-358, 360-408, 412-460, 464-506, 514-570, 574-622, and 625-668; these read DYVE…KWTE, KFVS…KWSH, KFTP…KWNP, LFEA…VHSH, SFQL…ELNV, AFVK…RWQG, and GFVA…RLRT. Asn320 carries N-linked (GlcNAc...) asparagine glycosylation. Residues Asn468, Asn497, Asn556, and Asn569 are each glycosylated (N-linked (GlcNAc...) asparagine).

Its subcellular location is the secreted. It is found in the cell surface. The protein localises to the cell projection. The protein resides in the stereocilium. Plays a critical role in tooth and hair follicle morphogenesis through regulation of the Notch signaling pathway. May play a role in development or function of the auditory system. This chain is Thrombospondin-type laminin G domain and EAR repeat-containing protein (TSPEAR), found in Homo sapiens (Human).